Reading from the N-terminus, the 504-residue chain is Sucrose phosphorylase (504 aa).

Aspartate 50 is a binding site for substrate. Sucrose is bound by residues histidine 88, 190 to 192 (RLD), glutamate 232, 289 to 290 (HD), 342 to 345 (DLYQ), and arginine 399. Aspartate 192 serves as the catalytic Nucleophile. Glutamate 232 serves as the catalytic Proton donor.

This sequence belongs to the glycosyl hydrolase 13 family. Sucrose phosphorylase subfamily. As to quaternary structure, homodimer.

The enzyme catalyses sucrose + phosphate = D-fructose + alpha-D-glucose 1-phosphate. Catalyzes the reversible phosphorolysis of sucrose into alpha-D-glucose 1-phosphate (Glc1P) and D-fructose. Is involved in sucrose degradation. Also displays transglucosylation activity in vitro, by transferring the glucosyl moiety of Glc1P to a broad range of monomeric sugars, such as D- and L-arabinose, D- and L-arabitol, and xylitol. The sequence is that of Sucrose phosphorylase from Bifidobacterium adolescentis (strain ATCC 15703 / DSM 20083 / NCTC 11814 / E194a).